A 761-amino-acid chain; its full sequence is Phosphoribosylformylglycinamidine synthase subunit PurL (761 aa).

His-49 is a catalytic residue. ATP contacts are provided by Tyr-52 and Lys-92. Mg(2+) is bound at residue Glu-94. Residues 95 to 98 (SHNH) and Arg-117 contribute to the substrate site. The Proton acceptor role is filled by His-96. Position 118 (Asp-118) interacts with Mg(2+). A substrate-binding site is contributed by Gln-241. Residue Asp-269 participates in Mg(2+) binding. 318–320 (ESQ) is a substrate binding site. Asn-502 and Gly-539 together coordinate ATP. A Mg(2+)-binding site is contributed by Asn-540. Ser-542 contacts substrate.

Belongs to the FGAMS family. In terms of assembly, monomer. Part of the FGAM synthase complex composed of 1 PurL, 1 PurQ and 2 PurS subunits.

It is found in the cytoplasm. It catalyses the reaction N(2)-formyl-N(1)-(5-phospho-beta-D-ribosyl)glycinamide + L-glutamine + ATP + H2O = 2-formamido-N(1)-(5-O-phospho-beta-D-ribosyl)acetamidine + L-glutamate + ADP + phosphate + H(+). It functions in the pathway purine metabolism; IMP biosynthesis via de novo pathway; 5-amino-1-(5-phospho-D-ribosyl)imidazole from N(2)-formyl-N(1)-(5-phospho-D-ribosyl)glycinamide: step 1/2. In terms of biological role, part of the phosphoribosylformylglycinamidine synthase complex involved in the purines biosynthetic pathway. Catalyzes the ATP-dependent conversion of formylglycinamide ribonucleotide (FGAR) and glutamine to yield formylglycinamidine ribonucleotide (FGAM) and glutamate. The FGAM synthase complex is composed of three subunits. PurQ produces an ammonia molecule by converting glutamine to glutamate. PurL transfers the ammonia molecule to FGAR to form FGAM in an ATP-dependent manner. PurS interacts with PurQ and PurL and is thought to assist in the transfer of the ammonia molecule from PurQ to PurL. This is Phosphoribosylformylglycinamidine synthase subunit PurL from Chlorobium luteolum (strain DSM 273 / BCRC 81028 / 2530) (Pelodictyon luteolum).